Consider the following 93-residue polypeptide: UPF0358 protein lin1058 (93 aa).

It belongs to the UPF0358 family.

The chain is UPF0358 protein lin1058 from Listeria innocua serovar 6a (strain ATCC BAA-680 / CLIP 11262).